The following is a 272-amino-acid chain: Putative MgpC-like protein MPN_366 (272 aa).

2 disordered regions span residues 65-84 and 171-196; these read QESQ…TSGS and GSGQ…PMPS. Low complexity predominate over residues 72-84; that stretch reads NGSQSGSSDTSGS. A compositionally biased stretch (polar residues) spans 173-187; sequence GQESSWNSQRSQKGL.

Belongs to the MgpC family.

This is Putative MgpC-like protein MPN_366 from Mycoplasma pneumoniae (strain ATCC 29342 / M129 / Subtype 1) (Mycoplasmoides pneumoniae).